A 38-amino-acid polypeptide reads, in one-letter code: Cytochrome b6-f complex subunit 5 (38 aa).

A helical membrane pass occupies residues 5–25 (LLLGIVLGLIPVTLAGLFVAA).

The protein belongs to the PetG family. In terms of assembly, the 4 large subunits of the cytochrome b6-f complex are cytochrome b6, subunit IV (17 kDa polypeptide, PetD), cytochrome f and the Rieske protein, while the 4 small subunits are PetG, PetL, PetM and PetN. The complex functions as a dimer.

Its subcellular location is the cellular thylakoid membrane. Functionally, component of the cytochrome b6-f complex, which mediates electron transfer between photosystem II (PSII) and photosystem I (PSI), cyclic electron flow around PSI, and state transitions. PetG is required for either the stability or assembly of the cytochrome b6-f complex. This is Cytochrome b6-f complex subunit 5 from Picosynechococcus sp. (strain ATCC 27264 / PCC 7002 / PR-6) (Agmenellum quadruplicatum).